The following is a 314-amino-acid chain: Formimidoylglutamase (314 aa).

Residues His127, Asp153, His155, Asp157, Asp245, and Asp247 each contribute to the Mn(2+) site.

Belongs to the arginase family. Requires Mn(2+) as cofactor.

The enzyme catalyses N-formimidoyl-L-glutamate + H2O = formamide + L-glutamate. It functions in the pathway amino-acid degradation; L-histidine degradation into L-glutamate; L-glutamate from N-formimidoyl-L-glutamate (hydrolase route): step 1/1. In terms of biological role, catalyzes the conversion of N-formimidoyl-L-glutamate to L-glutamate and formamide. The protein is Formimidoylglutamase of Aeromonas salmonicida (strain A449).